The chain runs to 464 residues: Endo-1,4-beta-xylanase A (464 aa).

An N-terminal signal peptide occupies residues Met1 to Ala33. Positions Thr40–Ala349 constitute a GH10 domain. Glu166 (proton donor) is an active-site residue. Glu271 serves as the catalytic Nucleophile. The CBM2 domain maps to Ser354–Gly457.

The protein belongs to the glycosyl hydrolase 10 (cellulase F) family. Does not require any standard metal (Mg(2+), Mn2(+), Ca(2+)). is required as a cofactor.

It catalyses the reaction Endohydrolysis of (1-&gt;4)-beta-D-xylosidic linkages in xylans.. The protein operates within glycan degradation; xylan degradation. Its activity is regulated as follows. Completely inhibited by Hg(2+), unaffected by EDTA. In terms of biological role, contributes to hydrolysis of hemicellulose, the major component of plant cell-walls. Hydrolyzes xylan to xylose and xylobiose. This chain is Endo-1,4-beta-xylanase A (xynAS9), found in Streptomyces sp.